We begin with the raw amino-acid sequence, 30 residues long: Cycloviolacin-O7 (30 aa).

Positions 1-30 form a cross-link, cyclopeptide (Ser-Asn); the sequence is SIPCGESCVWIPCTITALAGCKCKSKVCYN. 3 cysteine pairs are disulfide-bonded: Cys-4–Cys-21, Cys-8–Cys-23, and Cys-13–Cys-28.

This is a cyclic peptide.

Its function is as follows. Probably participates in a plant defense mechanism. The chain is Cycloviolacin-O7 from Viola odorata (Sweet violet).